The following is a 223-amino-acid chain: Killer cell lectin-like receptor subfamily B member 1B allele C (223 aa).

The Cytoplasmic segment spans residues 1-45 (MDTAVVYADLHLARTGEPKRESPPSLSPDTCQCPRWHRLALKLGC). The ITIM motif motif lies at 5 to 10 (VVYADL). The short motif at 31–34 (CQCP) is the LCK-binding motif element. Residues 46-66 (ACFILLVLSVIGLGVLVLTLL) form a helical; Signal-anchor for type II membrane protein membrane-spanning segment. The Extracellular portion of the chain corresponds to 67–223 (QKPLLQNSPA…LKRESTCNDS (157 aa)). The C-type lectin domain occupies 101–211 (HRDKCFHVSQ…CDSDNIWICQ (111 aa)). 2 disulfides stabilise this stretch: Cys122-Cys210 and Cys189-Cys202.

In terms of assembly, homodimer; disulfide-linked. Interacts with tyrosine kinase LCK. Binds PTPN6/SHP-1 in a phosphorylation-dependent manner. As to expression, expressed in a subset of natural killer cells.

It is found in the membrane. Receptor for CLEC2D/OCIL. Ligand-binding contributes to inhibition of cytotoxic natural killer (NK) cells. May mediate MHC class I-independent 'missing-self' recognition of allografts, tumor cells and virus-infected cells. This chain is Killer cell lectin-like receptor subfamily B member 1B allele C, found in Rattus norvegicus (Rat).